A 545-amino-acid chain; its full sequence is Tyrosine decarboxylase 2 (545 aa).

Positions 23 to 44 (GYTNGNGHTNGNGNYNGNGHVN) are enriched in gly residues. Residues 23–45 (GYTNGNGHTNGNGNYNGNGHVNG) form a disordered region. Residues His-245 and His-360 each coordinate L-tyrosine. Lys-361 is subject to N6-(pyridoxal phosphate)lysine. L-tyrosine is bound at residue Tyr-390.

This sequence belongs to the group II decarboxylase family. In terms of assembly, homotetramer. Pyridoxal 5'-phosphate serves as cofactor. As to expression, expressed specifically in flowers.

It localises to the cytoplasm. The enzyme catalyses L-tyrosine + H(+) = tyramine + CO2. Its function is as follows. Converts tyrosine into tyramine, a precursor of isoquinoline alkaloids and various amides. The polypeptide is Tyrosine decarboxylase 2 (Arabidopsis thaliana (Mouse-ear cress)).